A 220-amino-acid polypeptide reads, in one-letter code: UPF0319 protein YccT (220 aa).

The signal sequence occupies residues 1-20 (MKTGIVTTLIALCLPVSVFA).

Belongs to the UPF0319 family.

This chain is UPF0319 protein YccT, found in Escherichia coli (strain 55989 / EAEC).